Here is a 420-residue protein sequence, read N- to C-terminus: Protein TabA (420 aa).

The residue at position 57 (K57) is an N6-(pyridoxal phosphate)lysine.

Belongs to the Orn/Lys/Arg decarboxylase class-II family. Pyridoxal 5'-phosphate serves as cofactor.

Functionally, involved in tabtoxin production and pathogenicity. In Pseudomonas amygdali pv. tabaci (Pseudomonas syringae pv. tabaci), this protein is Protein TabA (tabA).